The chain runs to 506 residues: Fe(3+)-transport system permease protein FbpB 2 (506 aa).

12 helical membrane passes run 9-29, 57-77, 90-110, 116-136, 174-194, 218-238, 275-295, 314-334, 350-370, 379-399, 428-448, and 480-500; these read LTLL…YVIL, LLMV…AFLL, VAMT…WISL, VFWG…YLPV, IGSS…AVSI, ALLS…EIFF, IFIL…IVGT, FIIS…LVWA, PYLL…YFSI, TFFV…QTTL, LTLP…FLNL, and AAAT…VFLL. The ABC transmembrane type-1 1 domain maps to 52 to 233; the sequence is LSNTMLLMVC…LMAICILIVF (182 aa). The 191-residue stretch at 310–500 folds into the ABC transmembrane type-1 2 domain; that stretch reads FSNSFIISGL…LFSGIPVFLL (191 aa).

It belongs to the binding-protein-dependent transport system permease family. FbpB subfamily. As to quaternary structure, the complex is composed of two ATP-binding proteins (FbpC), two transmembrane proteins (FbpB) and a solute-binding protein (FbpA).

The protein localises to the cell inner membrane. Functionally, part of the ABC transporter complex FbpABC (TC 3.A.1.10.1) involved in Fe(3+) ions import. Probably responsible for the translocation of the substrate across the membrane. This is Fe(3+)-transport system permease protein FbpB 2 (fbpB2) from Haemophilus influenzae (strain ATCC 51907 / DSM 11121 / KW20 / Rd).